The sequence spans 743 residues: MEQTYQYAWIIPFLPLPVPMLIGLGLLLFPTATKSLRRMWAFQSVLLLSIVMIFSMNLSIQQINSSSVYQYVWSWIINNDFSLEFGYLIDPLTSIMSILITTVGIMVLIYSDNYMSHDHGYLRFFAYMSFFSTSMLGLVTSSNLIQIYIFWELVGMCSYLLIGFWFTRPVAAKACQKAFVTNRVGDFGLLLGILGFYWITGSFEFRDLFQIFNNLISNNEVNFLFVTLCAVLLFAGAIAKSAQFPLHVWLPDAMEGPTPISALIHAATMVAAGIFLVARLMPLFIVIPHIMNLISLIGIITVFFGATLALAQKDIKRGLAYSTMSQLGYMMLALGMGSYRSALFHLITHAYSKALLFLGSGSVIHSMETLVGYCPKKSQNMVLMGGLTKHVPITKNSFLLGTLSLCGIPPLACFWSKDEILNDSWLYSPIFAIIAWSTAGLTAFYMCRIYLLTFEGHLNVHFQNYSGKRNTPLYSISLWGKAGSKISNKNLNFRLVTLLKKKKNGRPSFFSNKVYKMDENVRNMIQPFLSIPNFDNTKTYLYPYESDNTMLFPILILILFTLFVGFLGIPFNQDVDILSKWLTPSINLLHQNSNNSIDWYEFCEDAVFSVSIASFGIYIAFFLYKPVYSSFQNLDLINSFVKMGPKRIFSDKIKNAIYDWSYNRGYIDAFYGTFFTAGVRKLAKFTHFFDRRIIDGIPNGVGFMSFFVAEVIKSVGGGRISSYLFFYFSYVSIFLFIYYFLNL.

A run of 16 helical transmembrane segments spans residues 9–29, 40–60, 89–109, 125–145, 147–167, 185–205, 219–239, 258–278, 284–304, 327–347, 354–374, 396–416, 425–445, 551–571, 607–627, and 723–743; these read WIIP…LLLF, WAFQ…NLSI, IDPL…MVLI, FAYM…SNLI, IYIF…FWFT, GDFG…SFEF, NEVN…GAIA, TPIS…FLVA, FIVI…TVFF, LGYM…FHLI, ALLF…VGYC, NSFL…CFWS, WLYS…TAFY, LFPI…GIPF, VFSV…YKPV, and YLFF…FLNL.

It belongs to the complex I subunit 5 family. In terms of assembly, NDH is composed of at least 16 different subunits, 5 of which are encoded in the nucleus.

The protein resides in the plastid. It localises to the chloroplast thylakoid membrane. The catalysed reaction is a plastoquinone + NADH + (n+1) H(+)(in) = a plastoquinol + NAD(+) + n H(+)(out). The enzyme catalyses a plastoquinone + NADPH + (n+1) H(+)(in) = a plastoquinol + NADP(+) + n H(+)(out). Its function is as follows. NDH shuttles electrons from NAD(P)H:plastoquinone, via FMN and iron-sulfur (Fe-S) centers, to quinones in the photosynthetic chain and possibly in a chloroplast respiratory chain. The immediate electron acceptor for the enzyme in this species is believed to be plastoquinone. Couples the redox reaction to proton translocation, and thus conserves the redox energy in a proton gradient. The protein is NAD(P)H-quinone oxidoreductase subunit 5, chloroplastic (ndhF) of Ambrosia trifida (Giant ragweed).